We begin with the raw amino-acid sequence, 371 residues long: Serine/threonine-protein kinase 17B (371 aa).

The Protein kinase domain maps to 33–293 (TLTPKELGRG…AESCLSHSWL (261 aa)). Residues 39 to 47 (LGRGKFAVV) and K62 each bind ATP. D158 (proton acceptor) is an active-site residue. Residues 308-345 (SESSQTQDLSLRSSEDKTPKSCNGSCGDREDKENIPED) are disordered. Over residues 309–319 (ESSQTQDLSLR) the composition is skewed to polar residues.

Belongs to the protein kinase superfamily. CAMK Ser/Thr protein kinase family. DAP kinase subfamily. Interacts with CHP1; the interaction induces CHP1 to translocate from the Golgi to the nucleus. In terms of processing, autophosphorylated. As to expression, highly expressed in thymus, spleen, and testis, lower levels present in the brain.

It localises to the nucleus. Its subcellular location is the cell membrane. It is found in the endoplasmic reticulum-Golgi intermediate compartment. It catalyses the reaction L-seryl-[protein] + ATP = O-phospho-L-seryl-[protein] + ADP + H(+). The enzyme catalyses L-threonyl-[protein] + ATP = O-phospho-L-threonyl-[protein] + ADP + H(+). In terms of biological role, acts as a positive regulator of apoptosis. Phosphorylates myosin light chains. The protein is Serine/threonine-protein kinase 17B (Stk17b) of Rattus norvegicus (Rat).